Here is a 433-residue protein sequence, read N- to C-terminus: GTPase Der (433 aa).

2 EngA-type G domains span residues Asn-3–Ile-167 and Pro-174–Thr-349. Residues Gly-9–Ser-16, Asp-56–Tyr-60, Asn-119–Asp-122, Gly-180–Ser-187, Asp-227–Ile-231, and Asn-292–Asp-295 contribute to the GTP site. Positions Gln-350–Lys-433 constitute a KH-like domain.

Belongs to the TRAFAC class TrmE-Era-EngA-EngB-Septin-like GTPase superfamily. EngA (Der) GTPase family. In terms of assembly, associates with the 50S ribosomal subunit.

Its function is as follows. GTPase that plays an essential role in the late steps of ribosome biogenesis. The protein is GTPase Der of Amoebophilus asiaticus (strain 5a2).